Reading from the N-terminus, the 820-residue chain is Leucine--tRNA ligase (820 aa).

The 'HIGH' region signature appears at P42–H52. Residues K576–S580 carry the 'KMSKS' region motif. An ATP-binding site is contributed by K579.

Belongs to the class-I aminoacyl-tRNA synthetase family.

It is found in the cytoplasm. The enzyme catalyses tRNA(Leu) + L-leucine + ATP = L-leucyl-tRNA(Leu) + AMP + diphosphate. The protein is Leucine--tRNA ligase of Coxiella burnetii (strain RSA 493 / Nine Mile phase I).